A 67-amino-acid polypeptide reads, in one-letter code: Prokaryotic ubiquitin-like protein Pup (67 aa).

Residues Met-1–Asp-13 show a composition bias toward low complexity. The tract at residues Met-1–Gly-48 is disordered. Residues Pro-25–Phe-61 form an ARC ATPase binding region. The segment covering Gly-38–Gly-48 has biased composition (acidic residues). Gln-67 bears the Deamidated glutamine mark. An Isoglutamyl lysine isopeptide (Gln-Lys) (interchain with K-? in acceptor proteins) cross-link involves residue Gln-67.

It belongs to the prokaryotic ubiquitin-like protein family. Strongly interacts with the proteasome-associated ATPase ARC through a hydrophobic interface; the interacting region of Pup lies in its C-terminal half. There is one Pup binding site per ARC hexamer ring. In terms of processing, is modified by deamidation of its C-terminal glutamine to glutamate by the deamidase Dop, a prerequisite to the subsequent pupylation process.

Its pathway is protein degradation; proteasomal Pup-dependent pathway. Protein modifier that is covalently attached to lysine residues of substrate proteins, thereby targeting them for proteasomal degradation. The tagging system is termed pupylation. The sequence is that of Prokaryotic ubiquitin-like protein Pup from Pseudarthrobacter chlorophenolicus (strain ATCC 700700 / DSM 12829 / CIP 107037 / JCM 12360 / KCTC 9906 / NCIMB 13794 / A6) (Arthrobacter chlorophenolicus).